We begin with the raw amino-acid sequence, 172 residues long: Biogenesis of lysosome-related organelles complex 1 subunit 6 (172 aa).

Over residues 1–10 the composition is skewed to pro residues; it reads MSVPEPPPPD. Disordered stretches follow at residues 1-37 and 141-172; these read MSVP…PDEG and QKRQ…AKRT. The stretch at 63-167 forms a coiled coil; it reads DLQRSKRALQ…FEREKQLTAK (105 aa). A compositionally biased stretch (basic and acidic residues) spans 143–164; the sequence is RQREELEREQQREKEFEREKQL.

Belongs to the BLOC1S6 family. As to quaternary structure, octamer composed of one copy each BLOC1S1, BLOC1S2, BLOC1S3, BLOC1S4, BLOC1S5, BLOC1S6, DTNBP1/BLOC1S7 and SNAPIN/BLOC1S8. Interacts with SNAP47. Homodimer. Component of the biogenesis of lysosome-related organelles complex 1 (BLOC-1) composed of BLOC1S1, BLOC1S2, BLOC1S3, BLOC1S4, BLOC1S5, BLOC1S6, DTNBP1/BLOC1S7 and SNAPIN/BLOC1S8. Interacts with BLOC1S4, BLOC1S5, DTNBP1/BLOC1S7, F-actin, SNAP25 isoform 1 and STX12. Post-translationally, phosphorylated. Expressed in liver, kidney and spleen (at protein level). Ubiquitously expressed, with the highest expression levels observed in brain, heart, liver and kidney.

It is found in the cytoplasm. The protein localises to the membrane. In terms of biological role, component of the BLOC-1 complex, a complex that is required for normal biogenesis of lysosome-related organelles (LRO), such as platelet dense granules and melanosomes. In concert with the AP-3 complex, the BLOC-1 complex is required to target membrane protein cargos into vesicles assembled at cell bodies for delivery into neurites and nerve terminals. The BLOC-1 complex, in association with SNARE proteins, is also proposed to be involved in neurite extension. May play a role in intracellular vesicle trafficking, particularly in the vesicle-docking and fusion process. This chain is Biogenesis of lysosome-related organelles complex 1 subunit 6 (Bloc1s6), found in Mus musculus (Mouse).